Consider the following 554-residue polypeptide: Wee1-like protein kinase 2-C (554 aa).

Disordered stretches follow at residues 1-86 (MRTA…GGEC) and 145-183 (TLVN…SQMK). Polar residues-rich tracts occupy residues 38-48 (SPVSSWRTNNC) and 147-163 (VNVN…THFQ). The Protein kinase domain maps to 213-487 (FLEIEKIGAG…AKNSVLRRCV (275 aa)). Residues 219-227 (IGAGEFGSV) and lysine 242 each bind ATP. The Proton acceptor role is filled by aspartate 340. Mg(2+)-binding residues include asparagine 345 and aspartate 377. Residues 490–516 (AAELQKQLNVEKFKTAMLERELQAAKL) are a coiled coil.

Belongs to the protein kinase superfamily. Ser/Thr protein kinase family. WEE1 subfamily.

It localises to the nucleus. It catalyses the reaction L-tyrosyl-[protein] + ATP = O-phospho-L-tyrosyl-[protein] + ADP + H(+). Protein tyrosine kinase that phosphorylates and inhibits cdk1 and acts as a regulator of meiosis in oocytes. Required to ensure the meiotic cell cycle in oocytes by phosphorylating cdk1 at 'Tyr-15', leading to inhibit cdk1 activity and prevent meiosis. This chain is Wee1-like protein kinase 2-C (wee2-c), found in Xenopus laevis (African clawed frog).